Here is a 98-residue protein sequence, read N- to C-terminus: MTLIHMNVLMAFSMSLVGLLMYRSHLMSALLCLEGMMLSLFTLAALTILNSHFTLANMMPIILLVFAACEAAIGLALLVMVSNTYGTDYVQSLNLLQC.

The next 3 membrane-spanning stretches (helical) occupy residues 1–21, 29–49, and 61–81; these read MTLI…GLLM, ALLC…LTIL, and IILL…LVMV.

The protein belongs to the complex I subunit 4L family. In terms of assembly, core subunit of respiratory chain NADH dehydrogenase (Complex I) which is composed of 45 different subunits.

Its subcellular location is the mitochondrion inner membrane. It carries out the reaction a ubiquinone + NADH + 5 H(+)(in) = a ubiquinol + NAD(+) + 4 H(+)(out). In terms of biological role, core subunit of the mitochondrial membrane respiratory chain NADH dehydrogenase (Complex I) which catalyzes electron transfer from NADH through the respiratory chain, using ubiquinone as an electron acceptor. Part of the enzyme membrane arm which is embedded in the lipid bilayer and involved in proton translocation. The sequence is that of NADH-ubiquinone oxidoreductase chain 4L (MT-ND4L) from Balaenoptera borealis (Sei whale).